The chain runs to 212 residues: Riboflavin kinase (212 aa).

Positions Met1–Ser87 are H-T-H motif-like. The tract at residues Gly88–Val212 is riboflavin kinase. Gly97–Ala102 lines the CDP pocket. Mg(2+)-binding residues include Thr124 and Asn126. FMN contacts are provided by Thr180 and Glu188. Val193 to Arg196 is a binding site for CDP.

This sequence belongs to the archaeal riboflavin kinase family. Requires Mg(2+) as cofactor.

The enzyme catalyses riboflavin + CTP = CDP + FMN + H(+). It functions in the pathway cofactor biosynthesis; FMN biosynthesis; FMN from riboflavin (CTP route): step 1/1. In terms of biological role, catalyzes the CTP-dependent phosphorylation of riboflavin (vitamin B2) to form flavin mononucleotide (FMN). The polypeptide is Riboflavin kinase (ribK) (Pyrococcus abyssi (strain GE5 / Orsay)).